Here is a 111-residue protein sequence, read N- to C-terminus: Pyrimidine/purine nucleoside phosphorylase 1 (111 aa).

Belongs to the nucleoside phosphorylase PpnP family.

It catalyses the reaction a purine D-ribonucleoside + phosphate = a purine nucleobase + alpha-D-ribose 1-phosphate. The catalysed reaction is adenosine + phosphate = alpha-D-ribose 1-phosphate + adenine. The enzyme catalyses cytidine + phosphate = cytosine + alpha-D-ribose 1-phosphate. It carries out the reaction guanosine + phosphate = alpha-D-ribose 1-phosphate + guanine. It catalyses the reaction inosine + phosphate = alpha-D-ribose 1-phosphate + hypoxanthine. The catalysed reaction is thymidine + phosphate = 2-deoxy-alpha-D-ribose 1-phosphate + thymine. The enzyme catalyses uridine + phosphate = alpha-D-ribose 1-phosphate + uracil. It carries out the reaction xanthosine + phosphate = alpha-D-ribose 1-phosphate + xanthine. Functionally, catalyzes the phosphorolysis of diverse nucleosides, yielding D-ribose 1-phosphate and the respective free bases. Can use uridine, adenosine, guanosine, cytidine, thymidine, inosine and xanthosine as substrates. Also catalyzes the reverse reactions. The chain is Pyrimidine/purine nucleoside phosphorylase 1 from Psychrobacter arcticus (strain DSM 17307 / VKM B-2377 / 273-4).